The sequence spans 143 residues: MSLSAAQKDNVKSSWAKASAAWGTAGPEFFMALFDAHDDVFAKFSGLFKGAAKGTVKNTPEMAAQAQSFKGLVSNWVDNLDNAGALEGQCKTFAANHKARGISAGQLEAAFKVLAGFMKSYGGDEGAWTAVAGALMGMIRPNM.

Ser-2 is subject to N-acetylserine. The Globin domain occupies 2–143 (SLSAAQKDNV…ALMGMIRPNM (142 aa)). His-97 serves as a coordination point for heme b.

It belongs to the globin family. Monomer.

The protein resides in the cytoplasm. Functionally, serves to transport hydrogen sulfide to autotrophic bacteria. The sequence is that of Hemoglobin-1 from Phacoides pectinatus (Thick lucine).